We begin with the raw amino-acid sequence, 426 residues long: Putative phosphate permease TC_0064 (426 aa).

11 consecutive transmembrane segments (helical) span residues 1–21, 37–57, 83–103, 104–124, 140–160, 183–203, 207–227, 260–280, 309–329, 365–385, and 399–419; these read MWWLLVCVVIGGFYTAWNIGA, LTLRQAVLIAAVFEFLGAVVL, VFGMTAALFATGVWLQIASFF, GWPVSTTHAIVGGVLGFGIIL, VSWLASPIIGGYFAFLIFSFI, AIIIFALGLILILSGAVARVV, VAFRVVCGLVVFAFAFTIWGV, LVVERIFAYLQIVIACFMSFA, VLFIFMSLGGLGLVFGLATWG, FGFPISTTHVVVGAVLGVGLA, and IVLSWFVTVPAGAALSIMFFL.

The protein belongs to the inorganic phosphate transporter (PiT) (TC 2.A.20) family.

It localises to the cell membrane. Functionally, potential transporter for phosphate. The polypeptide is Putative phosphate permease TC_0064 (Chlamydia muridarum (strain MoPn / Nigg)).